The following is a 218-amino-acid chain: Adapter protein MecA (218 aa).

The protein belongs to the MecA family. As to quaternary structure, homodimer.

In terms of biological role, enables the recognition and targeting of unfolded and aggregated proteins to the ClpC protease or to other proteins involved in proteolysis. The sequence is that of Adapter protein MecA from Exiguobacterium sp. (strain ATCC BAA-1283 / AT1b).